The following is a 105-amino-acid chain: Ig lambda-1 chain C region (105 aa).

The Ig-like domain maps to 6-100 (PSVTLFPPSS…EGHTVEKSLS (95 aa)). A disulfide bridge connects residues Cys-27 and Cys-86.

The sequence is that of Ig lambda-1 chain C region from Mus musculus (Mouse).